Reading from the N-terminus, the 390-residue chain is uncharacterized protein (390 aa).

The next 11 membrane-spanning stretches (helical) occupy residues 10-30, 43-63, 81-101, 134-154, 162-182, 213-233, 246-266, 272-292, 298-318, 341-361, and 363-383; these read LSFC…LPIL, FLIG…QIPF, FMFF…GLII, AIGV…PIIV, IFWI…FFVP, FYLG…MIPN, WKVY…FIFY, ILEN…IIFL, LLFL…LEVF, TSQF…YSFL, and FSQI…FSFF.

This sequence belongs to the major facilitator superfamily.

It is found in the cell membrane. This is an uncharacterized protein from Buchnera aphidicola subsp. Acyrthosiphon pisum (strain APS) (Acyrthosiphon pisum symbiotic bacterium).